The primary structure comprises 108 residues: UPF0235 protein RB8260 (108 aa).

This sequence belongs to the UPF0235 family.

This chain is UPF0235 protein RB8260, found in Rhodopirellula baltica (strain DSM 10527 / NCIMB 13988 / SH1).